The sequence spans 66 residues: U1-theraphotoxin-Cg1a 2 (66 aa).

The first 21 residues, 1–21, serve as a signal peptide directing secretion; the sequence is MKTSALFVIFGLVLLFCNSFA. Positions 22–29 are excised as a propeptide; sequence AELEMTGR. 3 cysteine pairs are disulfide-bonded: Cys-31-Cys-46, Cys-38-Cys-51, and Cys-45-Cys-58. Proline amide is present on Pro-63.

This sequence belongs to the neurotoxin 10 (Hwtx-1) family. 46 (Jztx-7/10/12) subfamily. In terms of tissue distribution, expressed by the venom gland.

The protein resides in the secreted. Functionally, probable ion channel inhibitor. In Chilobrachys guangxiensis (Chinese earth tiger tarantula), this protein is U1-theraphotoxin-Cg1a 2.